The primary structure comprises 282 residues: HTH-type transcriptional activator RhaR (282 aa).

An HTH araC/xylS-type domain is found at 179–277; sequence DKLITALANS…GMTPSQWRHL (99 aa). 2 DNA-binding regions (H-T-H motif) span residues 196 to 217 and 244 to 267; these read DAFC…RAQT and ISEI…TRET.

In terms of assembly, binds DNA as a dimer.

Its subcellular location is the cytoplasm. Functionally, activates expression of the rhaSR operon in response to L-rhamnose. This is HTH-type transcriptional activator RhaR from Salmonella schwarzengrund (strain CVM19633).